Reading from the N-terminus, the 158-residue chain is 2-C-methyl-D-erythritol 2,4-cyclodiphosphate synthase (158 aa).

Residues aspartate 10 and histidine 12 each contribute to the a divalent metal cation site. Residues 10-12 (DVH) and 36-37 (HS) contribute to the 4-CDP-2-C-methyl-D-erythritol 2-phosphate site. A divalent metal cation is bound at residue histidine 44. Residues 58-60 (DIG), 63-67 (FSDTD), and arginine 144 contribute to the 4-CDP-2-C-methyl-D-erythritol 2-phosphate site.

Belongs to the IspF family. As to quaternary structure, homotrimer. The cofactor is a divalent metal cation.

It catalyses the reaction 4-CDP-2-C-methyl-D-erythritol 2-phosphate = 2-C-methyl-D-erythritol 2,4-cyclic diphosphate + CMP. The protein operates within isoprenoid biosynthesis; isopentenyl diphosphate biosynthesis via DXP pathway; isopentenyl diphosphate from 1-deoxy-D-xylulose 5-phosphate: step 4/6. Involved in the biosynthesis of isopentenyl diphosphate (IPP) and dimethylallyl diphosphate (DMAPP), two major building blocks of isoprenoid compounds. Catalyzes the conversion of 4-diphosphocytidyl-2-C-methyl-D-erythritol 2-phosphate (CDP-ME2P) to 2-C-methyl-D-erythritol 2,4-cyclodiphosphate (ME-CPP) with a corresponding release of cytidine 5-monophosphate (CMP). This is 2-C-methyl-D-erythritol 2,4-cyclodiphosphate synthase from Burkholderia vietnamiensis (strain G4 / LMG 22486) (Burkholderia cepacia (strain R1808)).